The following is a 242-amino-acid chain: NH(3)-dependent NAD(+) synthetase (242 aa).

27–34 (GISGGIDS) serves as a coordination point for ATP. A Mg(2+)-binding site is contributed by D33. R109 provides a ligand contact to deamido-NAD(+). Position 129 (T129) interacts with ATP. Residue E134 coordinates Mg(2+). 2 residues coordinate deamido-NAD(+): K142 and D149. Positions 158 and 180 each coordinate ATP. 231 to 232 (HK) is a deamido-NAD(+) binding site.

The protein belongs to the NAD synthetase family. Homodimer.

It carries out the reaction deamido-NAD(+) + NH4(+) + ATP = AMP + diphosphate + NAD(+) + H(+). The protein operates within cofactor biosynthesis; NAD(+) biosynthesis; NAD(+) from deamido-NAD(+) (ammonia route): step 1/1. Its function is as follows. Catalyzes the ATP-dependent amidation of deamido-NAD to form NAD. Uses ammonia as a nitrogen source. This chain is NH(3)-dependent NAD(+) synthetase, found in Thermoplasma volcanium (strain ATCC 51530 / DSM 4299 / JCM 9571 / NBRC 15438 / GSS1).